The sequence spans 1097 residues: Nitric oxide synthase-like protein (1097 aa).

Cysteine 77 contacts heme b. L-arginine contacts are provided by glutamine 140, tryptophan 249, tyrosine 250, glutamate 254, and asparagine 259. (6R)-L-erythro-5,6,7,8-tetrahydrobiopterin-binding residues include tryptophan 340 and phenylalanine 353. Tyrosine 368 provides a ligand contact to heme b. The tract at residues 387–410 (KRPINRKFHFKQIARAVKFTSKLF) is calmodulin-binding. Residues 420 to 615 (ATVLYATETG…AFRKWASSVF (196 aa)) form the Flavodoxin-like domain. Residues 426 to 430 (TETGK) and 561 to 592 (VFALGSSAYPNFCNFGKYVDKLLVDLGGERIH) contribute to the FMN site. One can recognise an FAD-binding FR-type domain in the interval 669 to 914 (KQFVSCTVKA…IRSAPNFHLP (246 aa)). FAD-binding positions include 704–715 (YNPGDHVGIIAC) and 847–857 (LQPRFYSISSS). Residues 922-940 (ILIGPGTGIAPFRGFWHHR) and 1019-1034 (GAHFYVCGDCKMAEDV) contribute to the NADP(+) site.

This sequence belongs to the NOS family. It depends on heme b as a cofactor. The cofactor is FAD. FMN serves as cofactor.

The catalysed reaction is 2 L-arginine + 3 NADPH + 4 O2 + H(+) = 2 L-citrulline + 2 nitric oxide + 3 NADP(+) + 4 H2O. In terms of biological role, produces nitric oxide (NO) which is a messenger molecule with diverse functions throughout the body. In Bombyx mori (Silk moth), this protein is Nitric oxide synthase-like protein.